The sequence spans 20 residues: Fibrinogen beta chain (20 aa).

Residues 1–20 (ATDYEDEEFPGAVPPSVGAR) are disordered. An O-linked (GalNAc...) threonine glycan is attached at Thr2. Sulfotyrosine is present on Tyr4.

As to quaternary structure, heterohexamer; disulfide linked. Contains 2 sets of 3 non-identical chains (alpha, beta and gamma). The 2 heterotrimers are in head to head conformation with the N-termini in a small central domain. In terms of processing, conversion of fibrinogen to fibrin is triggered by thrombin, which cleaves fibrinopeptides A and B from alpha and beta chains, and thus exposes the N-terminal polymerization sites responsible for the formation of the soft clot.

The protein localises to the secreted. Functionally, cleaved by the protease thrombin to yield monomers which, together with fibrinogen alpha (FGA) and fibrinogen gamma (FGG), polymerize to form an insoluble fibrin matrix. Fibrin has a major function in hemostasis as one of the primary components of blood clots. In addition, functions during the early stages of wound repair to stabilize the lesion and guide cell migration during re-epithelialization. Was originally thought to be essential for platelet aggregation, based on in vitro studies using anticoagulated blood. However subsequent studies have shown that it is not absolutely required for thrombus formation in vivo. Enhances expression of SELP in activated platelets. Maternal fibrinogen is essential for successful pregnancy. Fibrin deposition is also associated with infection, where it protects against IFNG-mediated hemorrhage. May also facilitate the antibacterial immune response via both innate and T-cell mediated pathways. The protein is Fibrinogen beta chain (FGB) of Elephas maximus (Indian elephant).